Reading from the N-terminus, the 136-residue chain is Early E3 15.3 kDa protein (136 aa).

Belongs to the adenoviridae E3_15 family.

Its function is as follows. Protects virus-infected cells from TNF-induced cytolysis. The chain is Early E3 15.3 kDa protein from Human adenovirus B serotype 3 (HAdV-3).